A 102-amino-acid polypeptide reads, in one-letter code: Redox- and pH-responsive transcriptional regulator WhiB3 (102 aa).

The 4Fe-4S Wbl-type domain occupies 22–86 (LCRGMDSSMF…GGLSESERDL (65 aa)). Residues Cys-23, Cys-53, Cys-56, and Cys-62 each coordinate [4Fe-4S] cluster.

It belongs to the WhiB family. As to quaternary structure, homodimer. Interacts with the C-terminal 54 residues of sigma factor SigA (RpoV). [4Fe-4S] cluster is required as a cofactor. In terms of processing, the 4Fe-4S cluster interacts with NO, forming a protein-bound dinitrosyliron dithiol complex. The 4Fe-4S cluster interacts with O(2), leading to its degradation. Cluster loss takes about 2 hours. Once in the apo-form the cysteines oxidize to form 2 intramolecular disulfide bonds.

It is found in the cytoplasm. Functionally, a redox-sensitive transcriptional regulator. Maintains intracellular redox homeostasis by regulating catabolic metabolism and polyketide biosynthesis. Regulates expression of the redox buffer ergothioneine (ERG) in a carbon-source-dependent manner; loss of ERG or mycothiol (MSH, the other major redox buffer in this bacteria) leads to respiratory alterations and bioenergetic deficiencies that negatively impact virulence. In response to low external pH (like that found in host macrophage phagosomes) alters endogenous gene expression leading to acid resistance; MSH and WhiB3 are probably part of a regulatory circuit that mediates gene expression upon acid stress. Regulates pathogenic lipid synthesis, coordinating proprionate flux (and other host-derived fatty acid oxidation intermediates) into methyl-branched fatty acids (polyacyltrehalose, phthiocerol dimycocerosates, sulfolipids) and the storage lipid triacylglycerol, functioning as reductive sink. During intracellular growth M.tuberculosis uses host fatty acids as an energy source, generating large quantities of proprionate and NADH/NADPH, which are toxic and highly reducing respectively. WhiB3 is thought to help dissipate proprionate and NADH/NADPH by switching to the in vivo carbon source and via lipid anabolism. Responds to NO and O(2). Regulates expression of genes encoding modular polyketide synthases such as pks2, pks3 and fbpA. The oxidized apo-form of WhiB3 binds DNA (with 2 intramolecular disulfide bonds); holo-WhiB3 (with the 4Fe-4S cluster) binds DNA considerably less well. Discriminates poorly between specific and non-specific DNA-binding. Plays a role in virulence and nutritional stress. In its apo-form can act as a protein disulfide reductase. May respond to mycothiol (MSH) redox potential (E-MSH) which decreases at pH 4.5 for up to 72 hours, indicative of cellular reductive stress; deletion of whiB3 leads to a lesser E-MSH at 72 hours, indicative of cellular oxidative stress. Probably via its effects on production of polyketide lipids, regulates host gene expression, leading to blockage of phagosome maturation. Equilibration of extra- and intracytoplasmic pH kills bacteria. The chain is Redox- and pH-responsive transcriptional regulator WhiB3 (whiB3) from Mycobacterium tuberculosis (strain ATCC 25618 / H37Rv).